A 182-amino-acid polypeptide reads, in one-letter code: Ribosome-recycling factor (182 aa).

This sequence belongs to the RRF family.

The protein localises to the cytoplasm. Functionally, responsible for the release of ribosomes from messenger RNA at the termination of protein biosynthesis. May increase the efficiency of translation by recycling ribosomes from one round of translation to another. This chain is Ribosome-recycling factor, found in Synechococcus sp. (strain WH7803).